A 270-amino-acid polypeptide reads, in one-letter code: MANYTAADVKALREATGAGMLDCKKALDESQGDYDKAVEYLRIKGAKNVSKRAEREATEGLIAVSGNTMVEINCETDFVAKNEAFKSFASKIAEAAGEAKVNSGEELNNLEIDGKKVSEVVDEESAKTGEKLQARRAVTIEGDNVAVYLHQRSADLPPAVGVLVSYEGNAEGAHAVALQIAAMNAEYLTREDIPAEIVEKEREIAEATTREEGKPEAALPKIVEGRLNGFYKSVVLLEQASLSDSKKTVKQVADEAGTTITGFVRYEVGA.

The segment at 76–79 (TDFV) is involved in Mg(2+) ion dislocation from EF-Tu.

The protein belongs to the EF-Ts family.

It is found in the cytoplasm. In terms of biological role, associates with the EF-Tu.GDP complex and induces the exchange of GDP to GTP. It remains bound to the aminoacyl-tRNA.EF-Tu.GTP complex up to the GTP hydrolysis stage on the ribosome. This chain is Elongation factor Ts, found in Corynebacterium aurimucosum (strain ATCC 700975 / DSM 44827 / CIP 107346 / CN-1) (Corynebacterium nigricans).